We begin with the raw amino-acid sequence, 527 residues long: NAD(P)H-quinone oxidoreductase chain 4 1 (527 aa).

13 helical membrane passes run 6-26, 36-56, 91-111, 113-133, 136-156, 169-189, 212-232, 243-263, 275-295, 306-326, 331-351, 387-407, and 417-437; these read FPWLTAIILFPIVAALLVPII, WFALTVGLIDFALIIYAFYSS, LIILTGFITTLAILAAWPVTF, PKLFYFLMLLMYGGQIAVFAV, LLLFFLVWELELVPVYLILSI, FILYTAGGSLFILVAALTMAF, LFLYAGFLIAYGVKLPIFPLH, TAPAHMLLAGILLKMGGYALL, AVFAPVLVILGVVNIIYAALT, IAYSSISHMGFVLIGMASFTD, GAMLQMISHGLIGASLFFMVG, LALPGMSGFVAELMVFIGFAT, and VIIVFLAAIGVILTPIYLLSM.

The protein belongs to the complex I subunit 4 family.

The protein localises to the cellular thylakoid membrane. The catalysed reaction is a plastoquinone + NADH + (n+1) H(+)(in) = a plastoquinol + NAD(+) + n H(+)(out). The enzyme catalyses a plastoquinone + NADPH + (n+1) H(+)(in) = a plastoquinol + NADP(+) + n H(+)(out). Functionally, NDH-1 shuttles electrons from NAD(P)H, via FMN and iron-sulfur (Fe-S) centers, to quinones in the respiratory chain. The immediate electron acceptor for the enzyme in this species is believed to be plastoquinone. Couples the redox reaction to proton translocation (for every two electrons transferred, four hydrogen ions are translocated across the cytoplasmic membrane), and thus conserves the redox energy in a proton gradient. This is NAD(P)H-quinone oxidoreductase chain 4 1 from Microcystis aeruginosa (strain NIES-843 / IAM M-2473).